The primary structure comprises 744 residues: Eukaryotic translation initiation factor 3 subunit B (744 aa).

Residues 1 to 21 (MAPSFDHLPDPEEDEYDEEEL) form a disordered region. Acidic residues predominate over residues 11–21 (PEEDEYDEEEL). The RRM domain maps to 40-126 (TFVVIDGLPE…HTLRVNKLTD (87 aa)). 4 WD repeats span residues 193–232 (DRQH…RQKR), 234–290 (AHPF…PLRS), 307–348 (PIKR…LLDK), and 577–622 (ADHY…LREE).

The protein belongs to the eIF-3 subunit B family. In terms of assembly, component of the eukaryotic translation initiation factor 3 (eIF-3) complex.

The protein resides in the cytoplasm. In terms of biological role, RNA-binding component of the eukaryotic translation initiation factor 3 (eIF-3) complex, which is involved in protein synthesis of a specialized repertoire of mRNAs and, together with other initiation factors, stimulates binding of mRNA and methionyl-tRNAi to the 40S ribosome. The eIF-3 complex specifically targets and initiates translation of a subset of mRNAs involved in cell proliferation. The sequence is that of Eukaryotic translation initiation factor 3 subunit B (prt1) from Botryotinia fuckeliana (strain B05.10) (Noble rot fungus).